Consider the following 176-residue polypeptide: MAIRLEDKKAIVAEVNETAANALSLVVADARGVTVGAMDTLRKQARESGVRLQVVRNTLAKRAIEGTDFECVKDALVGPSIFGFSMEDPGAAARLFKDFAKEQSKFEIKALSVGGKLLEAGQIDALAKLPTLEQALGQLASVMIAPVTKLVRTFNEVPTKVTRVVAAVRDQKQDAA.

This sequence belongs to the universal ribosomal protein uL10 family. Part of the ribosomal stalk of the 50S ribosomal subunit. The N-terminus interacts with L11 and the large rRNA to form the base of the stalk. The C-terminus forms an elongated spine to which L12 dimers bind in a sequential fashion forming a multimeric L10(L12)X complex.

Functionally, forms part of the ribosomal stalk, playing a central role in the interaction of the ribosome with GTP-bound translation factors. The chain is Large ribosomal subunit protein uL10 from Saccharophagus degradans (strain 2-40 / ATCC 43961 / DSM 17024).